We begin with the raw amino-acid sequence, 243 residues long: Venom nerve growth factor (243 aa).

The signal sequence occupies residues 1–18; that stretch reads MSMLCYTLIIAFLIGIWA. Residues 19–125 constitute a propeptide that is removed on maturation; the sequence is APKSEDNVPL…TLNRNIRTKR (107 aa). The disordered stretch occupies residues 45-66; that stretch reads HEGLKTSRNTDQRHLAPKKAED. Residues 46–66 show a composition bias toward basic and acidic residues; that stretch reads EGLKTSRNTDQRHLAPKKAED. Disulfide bonds link C139–C204, C182–C232, and C192–C234. The N-linked (GlcNAc...) asparagine glycan is linked to N148.

This sequence belongs to the NGF-beta family. In terms of assembly, homodimer; non-covalently linked. In terms of tissue distribution, expressed by the venom gland.

It is found in the secreted. Functionally, nerve growth factor is important for the development and maintenance of the sympathetic and sensory nervous systems. It stimulates division and differentiation of sympathetic and embryonic sensory neurons as well as basal forebrain cholinergic neurons in the brain. Its relevance in the snake venom is not clear. However, it has been shown to inhibit metalloproteinase-dependent proteolysis of platelet glycoprotein Ib alpha, suggesting a metalloproteinase inhibition to prevent metalloprotease autodigestion and/or protection against prey proteases. Binds a lipid between the two protein chains in the homodimer. The lipid-bound form promotes histamine relase from mouse mast cells, contrary to the lipid-free form. The chain is Venom nerve growth factor from Cryptophis nigrescens (Eastern small-eyed snake).